Consider the following 513-residue polypeptide: GMP synthase [glutamine-hydrolyzing] (513 aa).

The region spanning 8 to 198 is the Glutamine amidotransferase type-1 domain; it reads MILVLDFGSQ…VFGVCDCEGK (191 aa). Cys-85 acts as the Nucleophile in catalysis. Active-site residues include His-172 and Glu-174. The 190-residue stretch at 199–388 folds into the GMPS ATP-PPase domain; it reads WSMENFIEIE…LGLPDDIVWR (190 aa). An ATP-binding site is contributed by 226 to 232; that stretch reads SGGVDSS.

As to quaternary structure, homodimer.

The enzyme catalyses XMP + L-glutamine + ATP + H2O = GMP + L-glutamate + AMP + diphosphate + 2 H(+). The protein operates within purine metabolism; GMP biosynthesis; GMP from XMP (L-Gln route): step 1/1. In terms of biological role, catalyzes the synthesis of GMP from XMP. This Bacillus velezensis (strain DSM 23117 / BGSC 10A6 / LMG 26770 / FZB42) (Bacillus amyloliquefaciens subsp. plantarum) protein is GMP synthase [glutamine-hydrolyzing].